The primary structure comprises 31 residues: Cycloviolin-A (31 aa).

Residues 1–31 constitute a cross-link (cyclopeptide (Gly-Asn)); sequence GVIPCGESCVFIPCISAAIGCSCKNKVCYRN. Intrachain disulfides connect C5/C21, C9/C23, and C14/C28.

This is a cyclic peptide.

Its function is as follows. Probably participates in a plant defense mechanism. Has anti-HIV activity. The polypeptide is Cycloviolin-A (Leonia cymosa (Sacha uba)).